Reading from the N-terminus, the 562-residue chain is Probable ganciclovir kinase (562 aa).

The span at 1–16 shows a compositional bias: polar residues; that stretch reads MDNGVETPQGQKTQPI. The tract at residues 1-32 is disordered; that stretch reads MDNGVETPQGQKTQPINLPPVRKKLRKHEGLG. Residues 201-209 and K218 contribute to the ATP site; that span reads LGVGAYGKV. D313 acts as the Proton acceptor in catalysis.

The protein belongs to the protein kinase superfamily. Tyr protein kinase family. HCMV ganciclovir subfamily.

Phosphorylates the antiviral nucleoside analog ganciclovir. This chain is Probable ganciclovir kinase (U69), found in Homo sapiens (Human).